The sequence spans 526 residues: Probable feruloyl esterase B-2 (526 aa).

The signal sequence occupies residues 1-18 (MTKLSLLPLLTLASAVLA). Intrachain disulfides connect Cys27–Cys74 and Cys62–Cys113. A glycan (N-linked (GlcNAc...) asparagine) is linked at Asn52. N-linked (GlcNAc...) asparagine glycosylation is present at Asn137. Disulfide bonds link Cys186/Cys441, Cys255/Cys272, Cys281/Cys291, and Cys503/Cys525. The active-site Acyl-ester intermediate is Ser187. Asn233 is a glycosylation site (N-linked (GlcNAc...) asparagine). Asp256, Asp259, Ala261, Asp263, and Ile265 together coordinate Ca(2+). A glycan (N-linked (GlcNAc...) asparagine) is linked at Asn311. Active-site charge relay system residues include Asp400 and His440. Asn516 carries an N-linked (GlcNAc...) asparagine glycan.

Belongs to the tannase family.

It localises to the secreted. It carries out the reaction feruloyl-polysaccharide + H2O = ferulate + polysaccharide.. Its function is as follows. Involved in degradation of plant cell walls. Hydrolyzes the feruloyl-arabinose ester bond in arabinoxylans as well as the feruloyl-galactose and feruloyl-arabinose ester bonds in pectin. The protein is Probable feruloyl esterase B-2 (faeB-2) of Aspergillus fumigatus (strain CBS 144.89 / FGSC A1163 / CEA10) (Neosartorya fumigata).